The primary structure comprises 174 residues: Peptide methionine sulfoxide reductase MsrA (174 aa).

The active site involves cysteine 10.

It belongs to the MsrA Met sulfoxide reductase family.

It catalyses the reaction L-methionyl-[protein] + [thioredoxin]-disulfide + H2O = L-methionyl-(S)-S-oxide-[protein] + [thioredoxin]-dithiol. The catalysed reaction is [thioredoxin]-disulfide + L-methionine + H2O = L-methionine (S)-S-oxide + [thioredoxin]-dithiol. Its function is as follows. Has an important function as a repair enzyme for proteins that have been inactivated by oxidation. Catalyzes the reversible oxidation-reduction of methionine sulfoxide in proteins to methionine. This is Peptide methionine sulfoxide reductase MsrA from Paenarthrobacter aurescens (strain TC1).